The chain runs to 298 residues: Phosphatidylglycerol--prolipoprotein diacylglyceryl transferase (298 aa).

A run of 7 helical transmembrane segments spans residues 17–37, 59–79, 97–117, 129–149, 204–224, 230–250, and 257–277; these read LAVR…IVVG, MMFY…VLFY, GGMS…LFAW, FVAP…FING, SQLY…FLFA, MGAI…TVEF, and FLGL…PMIL. Residue Arg142 participates in a 1,2-diacyl-sn-glycero-3-phospho-(1'-sn-glycerol) binding.

The protein belongs to the Lgt family.

Its subcellular location is the cell inner membrane. The enzyme catalyses L-cysteinyl-[prolipoprotein] + a 1,2-diacyl-sn-glycero-3-phospho-(1'-sn-glycerol) = an S-1,2-diacyl-sn-glyceryl-L-cysteinyl-[prolipoprotein] + sn-glycerol 1-phosphate + H(+). It participates in protein modification; lipoprotein biosynthesis (diacylglyceryl transfer). In terms of biological role, catalyzes the transfer of the diacylglyceryl group from phosphatidylglycerol to the sulfhydryl group of the N-terminal cysteine of a prolipoprotein, the first step in the formation of mature lipoproteins. This Burkholderia orbicola (strain MC0-3) protein is Phosphatidylglycerol--prolipoprotein diacylglyceryl transferase.